Here is a 159-residue protein sequence, read N- to C-terminus: Peptide methionine sulfoxide reductase MsrB (159 aa).

The 123-residue stretch at 22-144 (RERLEANLTA…NSVSLQFVKA (123 aa)) folds into the MsrB domain. Zn(2+) contacts are provided by Cys-61, Cys-64, Cys-110, and Cys-113. Cys-133 (nucleophile) is an active-site residue.

Belongs to the MsrB Met sulfoxide reductase family. The cofactor is Zn(2+).

The catalysed reaction is L-methionyl-[protein] + [thioredoxin]-disulfide + H2O = L-methionyl-(R)-S-oxide-[protein] + [thioredoxin]-dithiol. This is Peptide methionine sulfoxide reductase MsrB from Caulobacter vibrioides (strain ATCC 19089 / CIP 103742 / CB 15) (Caulobacter crescentus).